A 531-amino-acid polypeptide reads, in one-letter code: CCA tRNA nucleotidyltransferase, mitochondrial (531 aa).

This sequence belongs to the tRNA nucleotidyltransferase/poly(A) polymerase family.

It is found in the mitochondrion. The protein localises to the cytoplasm. It localises to the nucleus. The catalysed reaction is a tRNA precursor + 2 CTP + ATP = a tRNA with a 3' CCA end + 3 diphosphate. Nucleotidyltransferase that catalyzes the addition and repair of the essential 3'-terminal CCA sequence in tRNAs, which is necessary for the attachment of amino acids to the 3' terminus of tRNA molecules, using CTP and ATP as substrates. tRNA 3'-terminal CCA addition is required both for tRNA processing and repair. Also involved in tRNA surveillance by mediating tandem CCA addition to generate a CCACCA at the 3' terminus of unstable tRNAs. While stable tRNAs receive only 3'-terminal CCA, unstable tRNAs are marked with CCACCA and rapidly degraded. The structural flexibility of RNA controls the choice between CCA versus CCACCA addition: following the first CCA addition cycle, nucleotide-binding to the active site triggers a clockwise screw motion, producing torque on the RNA. This ejects stable RNAs, whereas unstable RNAs are refolded while bound to the enzyme and subjected to a second CCA catalytic cycle. The polypeptide is CCA tRNA nucleotidyltransferase, mitochondrial (CCA1) (Candida glabrata (strain ATCC 2001 / BCRC 20586 / JCM 3761 / NBRC 0622 / NRRL Y-65 / CBS 138) (Yeast)).